Reading from the N-terminus, the 280-residue chain is 3-methyl-2-oxobutanoate hydroxymethyltransferase (280 aa).

Positions 49 and 88 each coordinate Mg(2+). Residues 49 to 50 (DS), D88, and K118 contribute to the 3-methyl-2-oxobutanoate site. E120 serves as a coordination point for Mg(2+). E187 acts as the Proton acceptor in catalysis.

This sequence belongs to the PanB family. In terms of assembly, homodecamer; pentamer of dimers. Mg(2+) serves as cofactor.

The protein localises to the cytoplasm. It carries out the reaction 3-methyl-2-oxobutanoate + (6R)-5,10-methylene-5,6,7,8-tetrahydrofolate + H2O = 2-dehydropantoate + (6S)-5,6,7,8-tetrahydrofolate. It functions in the pathway cofactor biosynthesis; (R)-pantothenate biosynthesis; (R)-pantoate from 3-methyl-2-oxobutanoate: step 1/2. Catalyzes the reversible reaction in which hydroxymethyl group from 5,10-methylenetetrahydrofolate is transferred onto alpha-ketoisovalerate to form ketopantoate. This chain is 3-methyl-2-oxobutanoate hydroxymethyltransferase, found in Xanthobacter autotrophicus (strain ATCC BAA-1158 / Py2).